Consider the following 456-residue polypeptide: Putative F-box/FBD/LRR-repeat protein At1g66300 (456 aa).

Positions 1-23 (MDEDGEKRVRTKRLCSPESSDKK) are disordered. One can recognise an F-box domain in the interval 28–74 (VDWVRDLPESLICHVLLNLSTKDVIKNCVLSTKWRYLWRYVPGLDLD). LRR repeat units lie at residues 136-163 (HLDLEWGALEIPPIVYVCKSLVSLKLCG), 185-210 (VKFANDLALEMLISGCLVLKSLTLCR), 234-260 (PNTMGPEYEELIVEIDTPKLQDLTLSH), and 347-372 (FYEDRWEMLPFFLESCPNLKSLVVGS). Positions 377–429 (MERTSIISGHRCLLSSLEYVEIETPLTGEVFEMKLVSYLLENSPILKKLTIHL) constitute an FBD domain.

The chain is Putative F-box/FBD/LRR-repeat protein At1g66300 from Arabidopsis thaliana (Mouse-ear cress).